Consider the following 134-residue polypeptide: MVTLFLSPSCTSCRKARAWLVKHEVDFQEHNIITSPLSRDELMSILSFTENGTEDIISTRSKVFQKLDIDVEELSISGLIDLIAKNPSLLRRPIIMDQKRMQIGFNEDEIRAFLSRDYRKQELRQATIKAEIEG.

C10 and C13 form a disulfide bridge.

It belongs to the ArsC family. Spx subfamily. In terms of assembly, interacts with the C-terminal domain of the alpha subunit of the RNAP.

The protein localises to the cytoplasm. In terms of biological role, global transcriptional regulator that plays a key role in stress response and exerts either positive or negative regulation of genes. Acts by interacting with the C-terminal domain of the alpha subunit of the RNA polymerase (RNAP). This interaction can enhance binding of RNAP to the promoter region of target genes and stimulate their transcription, or block interaction of RNAP with activator. In Streptococcus pyogenes serotype M6 (strain ATCC BAA-946 / MGAS10394), this protein is Global transcriptional regulator Spx.